Consider the following 202-residue polypeptide: Endothelin-1 (202 aa).

Positions 1–25 (MDYFPMIFALLFVAFQGAPEAAVLG) are cleaved as a signal peptide. Residues 26-50 (TELSTGAESGGERPVPTTPWRPRRS) constitute a propeptide that is removed on maturation. The tract at residues 29–48 (STGAESGGERPVPTTPWRPR) is disordered. Intrachain disulfides connect cysteine 53–cysteine 67 and cysteine 55–cysteine 63. Residues 74-202 (VNTPEHVVPY…DKKVIYSRAH (129 aa)) constitute a propeptide that is removed on maturation. The interval 110-124 (CQCASQTDKKCQNFC) is endothelin-like.

The protein belongs to the endothelin/sarafotoxin family.

The protein localises to the secreted. Functionally, endothelins are endothelium-derived vasoconstrictor peptides. Probable ligand for G-protein coupled receptors EDNRA and EDNRB which activates PTK2B, BCAR1, BCAR3 and, GTPases RAP1 and RHOA cascade in glomerular mesangial cells. Also binds the DEAR/FBXW7-AS1 receptor. Promotes mesenteric arterial wall remodeling via activation of ROCK signaling and subsequent colocalization of NFATC3 with F-actin filaments. NFATC3 then translocates to the nucleus where it subsequently promotes the transcription of the smooth muscle hypertrophy and differentiation marker ACTA2. The chain is Endothelin-1 (EDN1) from Ovis aries (Sheep).